A 99-amino-acid polypeptide reads, in one-letter code: Small integral membrane protein 14 (99 aa).

At 1 to 49 (MAEGGFDPCECVCSHEHAMRRLINLLRQSQSYCTDTECLRELPGPSSDS) the chain is on the lumenal side. Residues 50–70 (GISITVILMAWMVIAMLLFLL) traverse the membrane as a helical segment. At 71 to 99 (RPPNLRGSSLPGKPSSPHSGQDPPAPPVD) the chain is on the cytoplasmic side. Residues 77–99 (GSSLPGKPSSPHSGQDPPAPPVD) form a disordered region.

In terms of tissue distribution, ubiquitously expressed.

It is found in the endoplasmic reticulum membrane. The protein is Small integral membrane protein 14 (Smim14) of Mus musculus (Mouse).